Here is a 127-residue protein sequence, read N- to C-terminus: Fluoride-specific ion channel FluC (127 aa).

A run of 4 helical transmembrane segments spans residues 8-28, 37-57, 68-88, and 100-120; these read LLIA…QYWF, PWGT…VYAI, WKFL…TFSY, and ILFL…AFAG. Na(+) is bound by residues G78 and T81.

The protein belongs to the fluoride channel Fluc/FEX (TC 1.A.43) family.

It localises to the cell inner membrane. It carries out the reaction fluoride(in) = fluoride(out). With respect to regulation, na(+) is not transported, but it plays an essential structural role and its presence is essential for fluoride channel function. Fluoride-specific ion channel. Important for reducing fluoride concentration in the cell, thus reducing its toxicity. The polypeptide is Fluoride-specific ion channel FluC (Leptospira interrogans serogroup Icterohaemorrhagiae serovar Lai (strain 56601)).